The sequence spans 123 residues: Large ribosomal subunit protein uL18 (123 aa).

It belongs to the universal ribosomal protein uL18 family. Part of the 50S ribosomal subunit; part of the 5S rRNA/L5/L18/L25 subcomplex. Contacts the 5S and 23S rRNAs.

This is one of the proteins that bind and probably mediate the attachment of the 5S RNA into the large ribosomal subunit, where it forms part of the central protuberance. This chain is Large ribosomal subunit protein uL18, found in Desulforudis audaxviator (strain MP104C).